The sequence spans 1433 residues: DNA polymerase III PolC-type (1433 aa).

Residues 419-575 (FVVFDVETTG…YDAEATGHLL (157 aa)) form the Exonuclease domain.

The protein belongs to the DNA polymerase type-C family. PolC subfamily.

The protein localises to the cytoplasm. It catalyses the reaction DNA(n) + a 2'-deoxyribonucleoside 5'-triphosphate = DNA(n+1) + diphosphate. Required for replicative DNA synthesis. This DNA polymerase also exhibits 3' to 5' exonuclease activity. This chain is DNA polymerase III PolC-type, found in Halalkalibacterium halodurans (strain ATCC BAA-125 / DSM 18197 / FERM 7344 / JCM 9153 / C-125) (Bacillus halodurans).